Consider the following 517-residue polypeptide: Synaptic vesicular amine transporter (517 aa).

The Cytoplasmic segment spans residues 1 to 20 (MALSELALLRRLQESRHSRK). The chain crosses the membrane as a helical span at residues 21–41 (LILFIVFLALLLDNMLLTVVV). Over 42–132 (PIIPSYLYSI…EDKDLLNENV (91 aa)) the chain is Extracellular. Residues Asn-84, Asn-91, and Asn-112 are each glycosylated (N-linked (GlcNAc...) asparagine). Cys-120 and Cys-327 are oxidised to a cystine. A helical transmembrane segment spans residues 133-153 (QVGLLFASKATVQLLTNPFIG). Residues 154-162 (LLTNRIGYP) are Cytoplasmic-facing. A helical transmembrane segment spans residues 163 to 183 (IPMFTGFCIMFISTVMFAFSR). Residues 184–192 (TYAFLLIAR) are Extracellular-facing. A helical transmembrane segment spans residues 193-213 (SLQGIGSSCSSVAGMGMLASV). Residues 214-222 (YTDDEERGN) lie on the Cytoplasmic side of the membrane. The chain crosses the membrane as a helical span at residues 223–245 (AMGIALGGLAMGVLVGPPFGSVL). Serotonin contacts are provided by Leu-231 and Val-235. Residues 246–251 (YEFVGK) are Extracellular-facing. The chain crosses the membrane as a helical span at residues 252–274 (TAPFLVLAALVLLDGAIQLFVLQ). At 275–294 (PSRVQPESQKGTPLTTLLRD) the chain is on the cytoplasmic side. Residues 295–314 (PYILIAAGSICFANMGIAML) traverse the membrane as a helical segment. Positions 308, 311, 315, 337, and 344 each coordinate serotonin. Topologically, residues 315 to 331 (EPALPIWMMETMCSHKW) are extracellular. A helical membrane pass occupies residues 332–355 (QLGVAFLPASVSYLIGTNVFGILA). The Cytoplasmic segment spans residues 356-360 (HKMGR). A helical membrane pass occupies residues 361–381 (WLCALLGMIIVGMSILCIPLA). Over 382–392 (KNIYGLIAPNF) the chain is Extracellular. Residues 393 to 413 (GVGFAIGMVDSSMMPIMGYLV) form a helical membrane-spanning segment. Asp-402 provides a ligand contact to serotonin. The Cytoplasmic segment spans residues 414–417 (DLRH). Residues 418 to 438 (VSVYGSVYAIADVAFCMGYAI) form a helical membrane-spanning segment. Tyr-436 provides a ligand contact to serotonin. Over 439–443 (GPSAG) the chain is Extracellular. The helical transmembrane segment at 444 to 465 (GAIAKAIGFPWLMTIIGIIDIL) threads the bilayer. Residues 466-517 (FAPLCFFLRSPPAKEEKMAILMDHNCPIKTKMYTQNSSQSHPIGEDEESESD) lie on the Cytoplasmic side of the membrane. Residues Ser-514 and Ser-516 each carry the phosphoserine; by CK2 modification.

The protein belongs to the major facilitator superfamily. Vesicular transporter family. In terms of assembly, interacts with SLC6A3.

The protein resides in the cytoplasmic vesicle. It localises to the secretory vesicle. Its subcellular location is the synaptic vesicle membrane. The protein localises to the secretory vesicle membrane. It is found in the cell projection. The protein resides in the axon. It localises to the dendrite. The catalysed reaction is serotonin(in) + 2 H(+)(out) = serotonin(out) + 2 H(+)(in). It catalyses the reaction dopamine(in) + 2 H(+)(out) = dopamine(out) + 2 H(+)(in). It carries out the reaction histamine(in) + 2 H(+)(out) = histamine(out) + 2 H(+)(in). Its activity is regulated as follows. Strongly inhibited by reserpine and tetrabenazine. Also inhibited to a lesser extent by ketanserin and fenfluramine. Reserpine and ketanserin inhibit by blocking the substrate-binding pocket. Tetrabenazine traps SLC18A2/VMAT2 in an occluded conformation and its inhibition is specific to SLC18A2/VMAT2 but not SLC18A1/VMAT1. In terms of biological role, electrogenic antiporter that exchanges one cationic monoamine with two intravesicular protons across the membrane of secretory and synaptic vesicles. Uses the electrochemical proton gradient established by the V-type proton-pump ATPase to accumulate high concentrations of monoamines inside the vesicles prior to their release via exocytosis. Transports a variety of catecholamines such as dopamine, adrenaline and noradrenaline, histamine, and indolamines such as serotonin. Regulates the transvesicular monoaminergic gradient that determines the quantal size. Mediates somatodendritic dopamine release in hippocampal neurons, likely as part of a regulated secretory pathway that integrates retrograde synaptic signals. Acts as a primary transporter for striatal dopamine loading ensuring impulse-dependent release of dopamine at the synaptic cleft. Responsible for histamine and serotonin storage and subsequent corelease from mast cell granules. In Bos taurus (Bovine), this protein is Synaptic vesicular amine transporter (SLC18A2).